The chain runs to 480 residues: UDP-glycosyltransferase 72B1 (480 aa).

Histidine 19 acts as the Proton acceptor in catalysis. Catalysis depends on aspartate 117, which acts as the Charge relay. Serine 277, tryptophan 346, alanine 347, and histidine 364 together coordinate UDP. UDP-alpha-D-glucose contacts are provided by serine 277, tryptophan 346, alanine 347, histidine 364, tryptophan 367, asparagine 368, serine 369, glutamate 372, tyrosine 386, glutamate 388, and glutamine 389. UDP contacts are provided by asparagine 368, serine 369, glutamate 372, and tyrosine 386.

Belongs to the UDP-glycosyltransferase family.

It carries out the reaction hydroquinone + UDP-alpha-D-glucose = hydroquinone O-beta-D-glucopyranoside + UDP + H(+). Bifunctional O-glycosyltransferase and N-glycosyltransferase that can detoxify xenobiotics. Possesses high activity to metabolize the persistent pollutants 2,4,5-trichlorophenol (TCP) and 3,4-dichloroaniline (DCA). Also active on benzoates and benzoate derivatives in vitro. This is UDP-glycosyltransferase 72B1 (UGT72B1) from Arabidopsis thaliana (Mouse-ear cress).